Consider the following 609-residue polypeptide: Phosphoenolpyruvate carboxykinase [GTP] (609 aa).

Residues Arg-81 and 220–222 (YGG) contribute to the substrate site. Residues Lys-229 and His-249 each contribute to the Mn(2+) site. Ser-271 serves as a coordination point for substrate. 272–277 (ACGKTN) is a binding site for GTP. The active site involves Cys-273. A Mn(2+)-binding site is contributed by Asp-296. A substrate-binding site is contributed by 387-389 (NSR). GTP-binding positions include Arg-389, Arg-420, and 515-518 (FGEN).

This sequence belongs to the phosphoenolpyruvate carboxykinase [GTP] family. As to quaternary structure, monomer. The cofactor is Mn(2+).

The protein localises to the cytoplasm. It catalyses the reaction oxaloacetate + GTP = phosphoenolpyruvate + GDP + CO2. The protein operates within carbohydrate biosynthesis; gluconeogenesis. Catalyzes the conversion of oxaloacetate (OAA) to phosphoenolpyruvate (PEP), the rate-limiting step in the metabolic pathway that produces glucose from lactate and other precursors derived from the citric acid cycle. The chain is Phosphoenolpyruvate carboxykinase [GTP] from Mycobacterium marinum (strain ATCC BAA-535 / M).